A 2055-amino-acid chain; its full sequence is Protein PHOTOPERIOD-INDEPENDENT EARLY FLOWERING 1 (2055 aa).

The disordered stretch occupies residues 1-47 (MASKGGKSKPDIVMASKSGKSKPDNESRAKRQKTLEAPKEPRRPKTH). Positions 21–47 (SKPDNESRAKRQKTLEAPKEPRRPKTH) are enriched in basic and acidic residues. The Nuclear localization signal 1 signature appears at 29-36 (AKRQKTLE). The region spanning 35–107 (LEAPKEPRRP…EEQRLRKVAL (73 aa)) is the HSA domain. Coiled coils occupy residues 78-147 (LRAS…LEFL) and 229-250 (EEDEKHFTKRERQEELEALQNE). Disordered stretches follow at residues 183-332 (KSDE…SNDS) and 340-359 (ETHSHDLEPGMTTASVKSRK). The segment covering 208 to 230 (ELDEDYDLKSEDETEDDEDTIEE) has biased composition (acidic residues). Composition is skewed to basic and acidic residues over residues 231–243 (DEKHFTKRERQEE) and 267–276 (VSRETSPVKD). The stretch at 392–416 (EEELAKADNEDHVEEIALLQKESEM) forms a coiled coil. Positions 432–461 (KDISEDESESSFAVSEDSIVDSDENRQQAD) are disordered. The Helicase ATP-binding domain maps to 548–713 (VTMYEKKLNG…WSLMHFLMPH (166 aa)). Residue 561-568 (DEMGLGKT) participates in ATP binding. The DEAH box motif lies at 664 to 667 (DEAH). A Helicase C-terminal domain is found at 1076-1229 (KLQELAMLLR…NLVIQNGEYN (154 aa)). A disordered region spans residues 1293–1313 (EEAVDNQEFTEEPVERPEDDE). The stretch at 1419 to 1492 (FEEKEWELDH…EREAAEVAEM (74 aa)) forms a coiled coil. Short sequence motifs (nuclear localization signal) lie at residues 1506 to 1513 (KKKKKAKK) and 1570 to 1577 (KKRDLIVD). Positions 1577 to 1597 (DTDEEKTSKKKAKKHKKSLPN) are disordered. A compositionally biased stretch (basic residues) spans 1584-1594 (SKKKAKKHKKS). Positions 1673–1727 (SWLPQEDAILCAMVHEYGPNWNFVSGTLYGMTAGGAYRGRYRHPAYCCERYRELI) constitute a Myb-like domain. Disordered stretches follow at residues 1843-1864 (ALQDSGPSQPDNTISRSRLQET) and 1951-1977 (KSRTGTKAQSLGKHKLSASDSAKSTKS). The span at 1844–1864 (LQDSGPSQPDNTISRSRLQET) shows a compositional bias: polar residues. Residues 2006–2029 (GDREEEEEQEVDEKANSAEIEMIS) are a coiled coil.

It belongs to the SNF2/RAD54 helicase family. SWR1 subfamily. Component of the SWR1 chromatin-remodeling complex composed of at least ARP6/ESD1/SUF3, PIE1, SWC6, SWC2 and H2AZs (HTA8, HTA9, HTA11). Interacts (via c-terminus) with SWC6 and ARP6 and (via N-terminus) with H2AZs. Expressed in ovules, but not in stamens.

It is found in the nucleus. It carries out the reaction ATP + H2O = ADP + phosphate + H(+). In terms of biological role, component of the SWR1 complex which mediates the ATP-dependent exchange of histone H2A for the H2A variant H2A.F/Z leading to transcriptional regulation of selected genes (e.g. FLC) by chromatin remodeling. Probable DNA-dependent ATPase. Not involved in the repression of FLC in gametophytes, but required for the reactivation of FLC in early embryos and for the maintenance of full activation of FLC in late embryos. The sequence is that of Protein PHOTOPERIOD-INDEPENDENT EARLY FLOWERING 1 (PIE1) from Arabidopsis thaliana (Mouse-ear cress).